Consider the following 185-residue polypeptide: Vomeronasal secretory protein 2 (185 aa).

A signal peptide spans 1–19 (MKSLLLTVTLSSLVATLQT). Residues C80 and C172 are joined by a disulfide bond.

It belongs to the calycin superfamily. Lipocalin family. As to expression, specifically expressed in vomeronasal and posterior glands of the nasal septum, the ducts of which open into the lumen of the vomeronasal organ.

It is found in the secreted. Its function is as follows. Transport of lipophilic molecules, possible pheromone-carrier. In Mus musculus (Mouse), this protein is Vomeronasal secretory protein 2 (Lcn4).